A 274-amino-acid polypeptide reads, in one-letter code: Proliferating cell nuclear antigen 1 (274 aa).

A DNA-binding region spans residues Arg-61 to Lys-80.

This sequence belongs to the PCNA family. Homotrimer. Interacts with ORC1 (via PIP-box motif); the interaction occurs during DNA replication in trophozoites. Interacts with ORC5; the interaction occurs during the trophozoite stage but not at the late schizont stage. Interacts with FEN1.

The protein localises to the nucleus. It is found in the chromosome. It localises to the cytoplasm. Its function is as follows. Auxiliary protein of DNA polymerase delta and is involved in the control of DNA replication by increasing the polymerase processibility during elongation of the leading strand. Involved in DNA damage response. This is Proliferating cell nuclear antigen 1 from Plasmodium falciparum (isolate 3D7).